The primary structure comprises 236 residues: V-set and transmembrane domain-containing protein 1 (236 aa).

The first 16 residues, 1 to 16, serve as a signal peptide directing secretion; it reads MTAEFLSLLCLGLCLG. Residues 17–135 are Extracellular-facing; sequence YEDEKKNEKP…APSMKTDTRT (119 aa). Residues 27-114 form the Ig-like V-type domain; sequence PKPSLHAWPS…EWSESSEHLQ (88 aa). N44 and N55 each carry an N-linked (GlcNAc...) asparagine glycan. C49 and C96 are joined by a disulfide. The chain crosses the membrane as a helical span at residues 136–156; that stretch reads IFVAIFSCISILLLFLSVFII. Residues 157–236 are Cytoplasmic-facing; that stretch reads YRCSQHSSSS…GSHEYAALKV (80 aa). The segment at 166–200 is disordered; that stretch reads SEESTKRTSHSKLPEQEAAEADLSNMERVSLSTAD. Short sequence motifs (ITIM motif) lie at residues 204–209 and 229–234; these read VTYAEL and HEYAAL. Positions 215–236 are disordered; the sequence is SEAASDTTQEPPGSHEYAALKV.

Post-translationally, isoform 2 is N-glycosylated. As to expression, expressed on myeloid (neutrophils, eosinophils and monocytes) but not on lymphoid cells.

The protein resides in the membrane. Its subcellular location is the secreted. Its function is as follows. Behaves as a cytokine, promoting IL17A secretion by CD4+ T-cells, and differentiation and activation of IL17 producing helper T-cells (TH17). In terms of biological role, inhibitory immune receptor involved in the regulation of phagocytes. The sequence is that of V-set and transmembrane domain-containing protein 1 (VSTM1) from Homo sapiens (Human).